The following is a 487-amino-acid chain: Aspartyl/glutamyl-tRNA(Asn/Gln) amidotransferase subunit B (487 aa).

It belongs to the GatB/GatE family. GatB subfamily. Heterotrimer of A, B and C subunits.

It carries out the reaction L-glutamyl-tRNA(Gln) + L-glutamine + ATP + H2O = L-glutaminyl-tRNA(Gln) + L-glutamate + ADP + phosphate + H(+). It catalyses the reaction L-aspartyl-tRNA(Asn) + L-glutamine + ATP + H2O = L-asparaginyl-tRNA(Asn) + L-glutamate + ADP + phosphate + 2 H(+). Its function is as follows. Allows the formation of correctly charged Asn-tRNA(Asn) or Gln-tRNA(Gln) through the transamidation of misacylated Asp-tRNA(Asn) or Glu-tRNA(Gln) in organisms which lack either or both of asparaginyl-tRNA or glutaminyl-tRNA synthetases. The reaction takes place in the presence of glutamine and ATP through an activated phospho-Asp-tRNA(Asn) or phospho-Glu-tRNA(Gln). The polypeptide is Aspartyl/glutamyl-tRNA(Asn/Gln) amidotransferase subunit B (Acidiphilium cryptum (strain JF-5)).